We begin with the raw amino-acid sequence, 355 residues long: UDP-N-acetylglucosamine--N-acetylmuramyl-(pentapeptide) pyrophosphoryl-undecaprenol N-acetylglucosamine transferase (355 aa).

UDP-N-acetyl-alpha-D-glucosamine contacts are provided by residues 14–16 (TGG), asparagine 126, arginine 162, serine 190, isoleucine 243, 262–267 (ALTVSE), and glutamine 287.

The protein belongs to the glycosyltransferase 28 family. MurG subfamily.

The protein localises to the cell inner membrane. It catalyses the reaction di-trans,octa-cis-undecaprenyl diphospho-N-acetyl-alpha-D-muramoyl-L-alanyl-D-glutamyl-meso-2,6-diaminopimeloyl-D-alanyl-D-alanine + UDP-N-acetyl-alpha-D-glucosamine = di-trans,octa-cis-undecaprenyl diphospho-[N-acetyl-alpha-D-glucosaminyl-(1-&gt;4)]-N-acetyl-alpha-D-muramoyl-L-alanyl-D-glutamyl-meso-2,6-diaminopimeloyl-D-alanyl-D-alanine + UDP + H(+). It functions in the pathway cell wall biogenesis; peptidoglycan biosynthesis. Its function is as follows. Cell wall formation. Catalyzes the transfer of a GlcNAc subunit on undecaprenyl-pyrophosphoryl-MurNAc-pentapeptide (lipid intermediate I) to form undecaprenyl-pyrophosphoryl-MurNAc-(pentapeptide)GlcNAc (lipid intermediate II). This Vibrio parahaemolyticus serotype O3:K6 (strain RIMD 2210633) protein is UDP-N-acetylglucosamine--N-acetylmuramyl-(pentapeptide) pyrophosphoryl-undecaprenol N-acetylglucosamine transferase.